The chain runs to 75 residues: uncharacterized protein (75 aa).

A dksA C4-type zinc finger spans residues 43 to 67 (CSECGLPIPTTRLRANPFAHRCVSC).

This is an uncharacterized protein from Haemophilus influenzae (strain ATCC 51907 / DSM 11121 / KW20 / Rd).